Here is a 353-residue protein sequence, read N- to C-terminus: Rhodopsin (353 aa).

Residues 1 to 36 (MNGTEGPYFYIPMVNTTGIVRSPYEYPQYYLVNPAA) are Extracellular-facing. N-linked (GlcNAc...) asparagine glycans are attached at residues Asn-2 and Asn-15. A helical transmembrane segment spans residues 37–61 (YAALGAYMFLLILLGFPINFLTLYV). Residues 62 to 73 (TIEHKKLRTPLN) are Cytoplasmic-facing. Residues 74–96 (YILLNLAVANLFMVFGGFTTTMY) traverse the membrane as a helical segment. Residues 97 to 110 (TSMHGYFVLGRLGC) lie on the Extracellular side of the membrane. Cys-110 and Cys-187 are joined by a disulfide. Residues 111–133 (NLEGFFATLGGEIALWSLVVLAV) form a helical membrane-spanning segment. The short motif at 134–136 (ERW) is the 'Ionic lock' involved in activated form stabilization element. The Cytoplasmic segment spans residues 134-152 (ERWMVVCKPISNFRFGENH). The helical transmembrane segment at 153–173 (AIMGLAFTWVMASACAVPPLV) threads the bilayer. The Extracellular segment spans residues 174–202 (GWSRYIPEGMQCSCGIDYYTRAEGFNNES). A glycan (N-linked (GlcNAc...) asparagine) is linked at Asn-200. A helical membrane pass occupies residues 203 to 224 (FVIYMFVCHFLIPLVVVFFCYG). The Cytoplasmic portion of the chain corresponds to 225 to 252 (RLLCAVKEAAAAQQESETTQRAEREVSR). The helical transmembrane segment at 253-274 (MVVIMVVAFLICWCPYAGVAWY) threads the bilayer. Over 275 to 286 (IFTHQGSEFGPL) the chain is Extracellular. Residues 287–308 (FMTFPAFFAKSSSIYNPMIYIC) traverse the membrane as a helical segment. Lys-296 carries the N6-(retinylidene)lysine modification. The Cytoplasmic segment spans residues 309-353 (MNKQFRHCMITTLCCGKNPFEEEEGASTTSKTEASSVSSSSVSPA). 2 S-palmitoyl cysteine lipidation sites follow: Cys-322 and Cys-323. The disordered stretch occupies residues 330 to 353 (EEEGASTTSKTEASSVSSSSVSPA). The segment covering 334-353 (ASTTSKTEASSVSSSSVSPA) has biased composition (low complexity).

It belongs to the G-protein coupled receptor 1 family. Opsin subfamily. Post-translationally, phosphorylated on some or all of the serine and threonine residues present in the C-terminal region. Contains one covalently linked retinal chromophore.

The protein resides in the membrane. It is found in the cell projection. The protein localises to the cilium. It localises to the photoreceptor outer segment. Functionally, photoreceptor required for image-forming vision at low light intensity. While most salt water fish species use retinal as chromophore, most freshwater fish use 3-dehydroretinal, or a mixture of retinal and 3-dehydroretinal. Light-induced isomerization of 11-cis to all-trans retinal triggers a conformational change that activates signaling via G-proteins. Subsequent receptor phosphorylation mediates displacement of the bound G-protein alpha subunit by arrestin and terminates signaling. The chain is Rhodopsin (rho) from Mugil cephalus (Flathead mullet).